A 670-amino-acid polypeptide reads, in one-letter code: Probable ATP-citrate synthase subunit 1 (670 aa).

Positions 1–22 are disordered; that stretch reads MPSATTASTNGANGASASPAPG. ATP contacts are provided by residues 257–277 and 308–334; these read LLRY…EVGG and FKTE…KNKS. Residue Glu274 coordinates Mg(2+). His316 acts as the Tele-phosphohistidine intermediate in catalysis. 335 to 345 contacts CoA; it reads MREAGFYVPDT.

It belongs to the succinate/malate CoA ligase alpha subunit family. In terms of assembly, composed of two subunits.

It localises to the cytoplasm. The enzyme catalyses oxaloacetate + acetyl-CoA + ADP + phosphate = citrate + ATP + CoA. In terms of biological role, catalyzes the formation of cytosolic acetyl-CoA, which is mainly used for the biosynthesis of fatty acids and sterols. This chain is Probable ATP-citrate synthase subunit 1, found in Neurospora crassa (strain ATCC 24698 / 74-OR23-1A / CBS 708.71 / DSM 1257 / FGSC 987).